Consider the following 308-residue polypeptide: Dual oxidase maturation factor 1 (308 aa).

Residues 1–21 (MQANIFPFYPQPRTSFKFDTK) are Extracellular-facing. The chain crosses the membrane as a helical span at residues 22–42 (IIEIIIICIVTACTFIIILPG). At 43 to 49 (IRGKSRS) the chain is on the cytoplasmic side. The chain crosses the membrane as a helical span at residues 50 to 70 (IWLFRILTSLFIGAVILAVNF). Residues 71–172 (TSDWETGIVT…SPCGLFQQYC (102 aa)) lie on the Extracellular side of the membrane. N-linked (GlcNAc...) asparagine glycosylation is found at Asn-94, Asn-107, and Asn-119. The chain crosses the membrane as a helical span at residues 173-195 (ISTYYSSEIMWVAFGSWILYNVL). Residues 196–199 (FSMP) lie on the Cytoplasmic side of the membrane. Residues 200–220 (VILYGICMMFVTAICMLVSLI) form a helical membrane-spanning segment. Topologically, residues 221–247 (SFASVRQAPVCNIHFGNAVLKTHFGVS) are extracellular. Residues 248 to 268 (YWLSLVTGLFCLIVSLVLLFL) form a helical membrane-spanning segment. Over 269-308 (YKTQPKVIRLIFSYGEEEDLSDKSENEEEHSSALSLNEML) the chain is Cytoplasmic.

Belongs to the DUOXA family.

Its subcellular location is the membrane. Possible role in maturation and transport from the endoplasmic reticulum to the plasma membrane of functional dual oxidase. The polypeptide is Dual oxidase maturation factor 1 (duoxa1) (Xenopus tropicalis (Western clawed frog)).